The chain runs to 229 residues: Endonuclease V (229 aa).

The Mg(2+) site is built by D36 and D104.

The protein belongs to the endonuclease V family. Requires Mg(2+) as cofactor.

It localises to the cytoplasm. The catalysed reaction is Endonucleolytic cleavage at apurinic or apyrimidinic sites to products with a 5'-phosphate.. In terms of biological role, DNA repair enzyme involved in the repair of deaminated bases. Selectively cleaves double-stranded DNA at the second phosphodiester bond 3' to a deoxyinosine leaving behind the intact lesion on the nicked DNA. This Pectobacterium carotovorum subsp. carotovorum (strain PC1) protein is Endonuclease V.